Here is a 519-residue protein sequence, read N- to C-terminus: Molybdate transporter 1 (519 aa).

The next 7 membrane-spanning stretches (helical) occupy residues 98 to 118 (LLHAGLFVAGCVGLLGASQAI), 164 to 184 (LGTEGLVVGAVALAAMIATTL), 370 to 390 (AVALSVALLNGAGVWLGAMPC), 412 to 432 (ILLGCIKAALGLLFGGSLVVL), 436 to 456 (FPQPLLGALLTVSGIELASVV), 464 to 484 (GYTFALLTAVAILALDNTGTG), and 485 to 505 (FLVGLVGVAAVAAYEGAVAAA).

Belongs to the SLC26A/SulP transporter (TC 2.A.53) family.

The protein localises to the membrane. With respect to regulation, 60% inhibition by 20 uM tungstate or by lack of glucose in the medium, but no inhibition by sulfate. In terms of biological role, high affinity molybdate transporter. Acts through an energy-dependent process. The sequence is that of Molybdate transporter 1 (MOT1) from Chlamydomonas reinhardtii (Chlamydomonas smithii).